Reading from the N-terminus, the 267-residue chain is UPF0162 protein HI_1558 (267 aa).

The protein belongs to the UPF0162 family.

This Haemophilus influenzae (strain ATCC 51907 / DSM 11121 / KW20 / Rd) protein is UPF0162 protein HI_1558.